The primary structure comprises 326 residues: Chain length determinant protein (326 aa).

The Cytoplasmic segment spans residues M1 to K31. The helical transmembrane segment at M32 to A52 threads the bilayer. Residues K53–K295 lie on the Periplasmic side of the membrane. The helical transmembrane segment at A296–G316 threads the bilayer. The Cytoplasmic portion of the chain corresponds to R317–K326.

This sequence belongs to the WzzB/Cld/Rol family. In terms of assembly, homodimer.

Its subcellular location is the cell inner membrane. It functions in the pathway bacterial outer membrane biogenesis; lipopolysaccharide biosynthesis. Functionally, confers a modal distribution of chain length on the O-antigen component of lipopolysaccharide (LPS). Gives rise to a reduced number of short chain molecules and increases in numbers of longer molecules. In Escherichia coli (strain K12), this protein is Chain length determinant protein (wzzB).